Here is a 226-residue protein sequence, read N- to C-terminus: Isoprenyl transferase (226 aa).

Asp-12 is a catalytic residue. Residue Asp-12 coordinates Mg(2+). Substrate-binding positions include 13 to 16, Trp-17, Lys-25, His-29, and 57 to 59; these read GNAR and SSE. The Proton acceptor role is filled by Asn-60. Substrate is bound by residues Trp-61, Arg-63, Arg-174, and 180–182; that span reads RIS. Glu-193 provides a ligand contact to Mg(2+).

This sequence belongs to the UPP synthase family. As to quaternary structure, homodimer. Requires Mg(2+) as cofactor.

Functionally, catalyzes the condensation of isopentenyl diphosphate (IPP) with allylic pyrophosphates generating different type of terpenoids. This is Isoprenyl transferase from Rickettsia bellii (strain RML369-C).